A 166-amino-acid polypeptide reads, in one-letter code: Ribosome maturation factor RimM (166 aa).

One can recognise a PRC barrel domain in the interval 92 to 164 (EGVYYDFQLI…KIIIDPIPGL (73 aa)).

This sequence belongs to the RimM family. As to quaternary structure, binds ribosomal protein uS19.

Its subcellular location is the cytoplasm. Functionally, an accessory protein needed during the final step in the assembly of 30S ribosomal subunit, possibly for assembly of the head region. Essential for efficient processing of 16S rRNA. May be needed both before and after RbfA during the maturation of 16S rRNA. It has affinity for free ribosomal 30S subunits but not for 70S ribosomes. The sequence is that of Ribosome maturation factor RimM from Dehalococcoides mccartyi (strain CBDB1).